We begin with the raw amino-acid sequence, 329 residues long: Transcription factor RF2b (329 aa).

Disordered regions lie at residues 1–24 (MQEP…RSEV) and 62–97 (SSGP…DGSG). In terms of domain architecture, bZIP spans 132-195 (DPKRAKRILA…TGLSAENAEL (64 aa)). Positions 134–155 (KRAKRILANRQSAARSKERKAR) are basic motif. Residues 160-174 (LERKVQTLQTEATTL) are leucine-zipper. The tract at residues 260 to 303 (RQNGGTQLPPQFQPPRPNVPNHMLSHPNGLQDIMQQDPLGRLQG) is disordered.

It belongs to the bZIP family. As to quaternary structure, binds DNA as a homodimer or as a heterodimer with RF2a. The heterodimer binds stronger to DNA than the homodimer. Expressed at high levels in roots, low level in leaf sheath, but not in leaf blade. Predominantly expressed in vascular tissues.

The protein localises to the nucleus. In terms of biological role, transcription factor probably involved in vascular development and shoot tissue organization. Binds to the DNA sequence 5'-CCGAGTGTGCCCCTGG-3' present in the promoter region Box II of the phloem-specific rice tungro bacilliform virus (RTBV) promoter. May regulate tissue-specific expression of the RTBV promoter and virus replication. The polypeptide is Transcription factor RF2b (RF2b) (Oryza sativa subsp. japonica (Rice)).